The chain runs to 1174 residues: Probable pyruvate-flavodoxin oxidoreductase (1174 aa).

4Fe-4S ferredoxin-type domains are found at residues Glu680–Val709 and Tyr736–Ile765. [4Fe-4S] cluster is bound by residues Cys689, Cys692, Cys695, Cys699, Cys745, Cys748, Cys751, Cys755, Cys819, Cys822, Cys847, and Cys1071.

This sequence belongs to the pyruvate:ferredoxin/flavodoxin oxidoreductase family. The cofactor is [4Fe-4S] cluster.

The catalysed reaction is oxidized [flavodoxin] + pyruvate + CoA + 2 H(+) = reduced [flavodoxin] + acetyl-CoA + CO2. Functionally, oxidoreductase required for the transfer of electrons from pyruvate to flavodoxin. In Escherichia coli (strain K12), this protein is Probable pyruvate-flavodoxin oxidoreductase (ydbK).